Here is a 394-residue protein sequence, read N- to C-terminus: Ribulose bisphosphate carboxylase large chain (394 aa).

K5 bears the N6,N6,N6-trimethyllysine mark. N114 and T164 together coordinate substrate. K166 functions as the Proton acceptor in the catalytic mechanism. K168 serves as a coordination point for substrate. 3 residues coordinate Mg(2+): K192, D194, and E195. The residue at position 192 (K192) is an N6-carboxylysine. Residue H285 is the Proton acceptor of the active site. Substrate is bound by residues R286, H318, and S370.

It belongs to the RuBisCO large chain family. Type I subfamily. In terms of assembly, heterohexadecamer of 8 large chains and 8 small chains. Mg(2+) serves as cofactor.

Its subcellular location is the plastid. The protein resides in the chloroplast. The enzyme catalyses 2 (2R)-3-phosphoglycerate + 2 H(+) = D-ribulose 1,5-bisphosphate + CO2 + H2O. The catalysed reaction is D-ribulose 1,5-bisphosphate + O2 = 2-phosphoglycolate + (2R)-3-phosphoglycerate + 2 H(+). Its function is as follows. RuBisCO catalyzes two reactions: the carboxylation of D-ribulose 1,5-bisphosphate, the primary event in carbon dioxide fixation, as well as the oxidative fragmentation of the pentose substrate in the photorespiration process. Both reactions occur simultaneously and in competition at the same active site. This Cabomba caroliniana (Carolina fanwort) protein is Ribulose bisphosphate carboxylase large chain (rbcL).